The chain runs to 556 residues: 2-succinyl-5-enolpyruvyl-6-hydroxy-3-cyclohexene-1-carboxylate synthase (556 aa).

The protein belongs to the TPP enzyme family. MenD subfamily. As to quaternary structure, homodimer. It depends on Mg(2+) as a cofactor. Mn(2+) is required as a cofactor. Thiamine diphosphate serves as cofactor.

It catalyses the reaction isochorismate + 2-oxoglutarate + H(+) = 5-enolpyruvoyl-6-hydroxy-2-succinyl-cyclohex-3-ene-1-carboxylate + CO2. The protein operates within quinol/quinone metabolism; 1,4-dihydroxy-2-naphthoate biosynthesis; 1,4-dihydroxy-2-naphthoate from chorismate: step 2/7. It functions in the pathway quinol/quinone metabolism; menaquinone biosynthesis. In terms of biological role, catalyzes the thiamine diphosphate-dependent decarboxylation of 2-oxoglutarate and the subsequent addition of the resulting succinic semialdehyde-thiamine pyrophosphate anion to isochorismate to yield 2-succinyl-5-enolpyruvyl-6-hydroxy-3-cyclohexene-1-carboxylate (SEPHCHC). This chain is 2-succinyl-5-enolpyruvyl-6-hydroxy-3-cyclohexene-1-carboxylate synthase, found in Enterobacter sp. (strain 638).